The chain runs to 827 residues: Lon protease (827 aa).

In terms of domain architecture, Lon N-terminal spans 38–233; it reads LTLLASKYNV…VLLKYLLKDL (196 aa). Residue 384–391 participates in ATP binding; the sequence is GPPGVGKT. The Lon proteolytic domain maps to 619–800; that stretch reads THLPGVAIGL…EEVIQLALQP (182 aa). Residues Ser-706 and Lys-749 contribute to the active site.

This sequence belongs to the peptidase S16 family. As to quaternary structure, homohexamer. Organized in a ring with a central cavity.

It is found in the cytoplasm. The enzyme catalyses Hydrolysis of proteins in presence of ATP.. ATP-dependent serine protease that mediates the selective degradation of mutant and abnormal proteins as well as certain short-lived regulatory proteins. Required for cellular homeostasis and for survival from DNA damage and developmental changes induced by stress. Degrades polypeptides processively to yield small peptide fragments that are 5 to 10 amino acids long. Binds to DNA in a double-stranded, site-specific manner. The protein is Lon protease of Amoebophilus asiaticus (strain 5a2).